The following is a 299-amino-acid chain: Undecaprenyl-diphosphatase (299 aa).

Transmembrane regions (helical) follow at residues 10 to 32 (LFSL…RNLV), 63 to 83 (PGVS…IAYF), 112 to 132 (LAIA…KLFW), 143 to 163 (LPSI…AESF), 178 to 198 (GFVV…RSGS), 213 to 233 (AARF…LVEL), 243 to 263 (GGVL…WLAI), and 276 to 296 (WIFV…WLSG).

Belongs to the UppP family.

The protein resides in the cell inner membrane. It catalyses the reaction di-trans,octa-cis-undecaprenyl diphosphate + H2O = di-trans,octa-cis-undecaprenyl phosphate + phosphate + H(+). Functionally, catalyzes the dephosphorylation of undecaprenyl diphosphate (UPP). Confers resistance to bacitracin. In Prochlorococcus marinus (strain MIT 9313), this protein is Undecaprenyl-diphosphatase.